Reading from the N-terminus, the 183-residue chain is Gamma-crystallin N (183 aa).

Beta/gamma crystallin 'Greek key' domains lie at 6–46 (GKIT…RVES), 47–89 (GAWV…RPVG), 95–136 (FRID…KVYG), and 138–180 (GAWV…RRVL).

It belongs to the beta/gamma-crystallin family. Monomer. Detected in the auditory hindbrain where it is highly expressed in the medial nucleus of the trapezoid body, but also present in other nuclei of the superior olivary complex.

Functionally, crystallins are the dominant structural components of the vertebrate eye lens. Also plays an important role for integrity and function of auditory nuclei. The protein is Gamma-crystallin N of Rattus norvegicus (Rat).